Reading from the N-terminus, the 398-residue chain is Cytohesin-1 (398 aa).

Met1 is subject to N-acetylmethionine. Residues 1–60 (MEDDDSYVPSDLTAEERQELENIRRRKQELLADIQRLKEEIAEVANEIESLGSTEERKNM) are necessary for localization at adherens junction. Positions 10–67 (SDLTAEERQELENIRRRKQELLADIQRLKEEIAEVANEIESLGSTEERKNMQRNKQVA) form a coiled coil. The SEC7 domain maps to 73–202 (FNMDPKKGIQ…IIMLNTSLHN (130 aa)). The region spanning 260–377 (NPDREGWLLK…WIKCIKAAIS (118 aa)) is the PH domain. Residues 269–277 (KLGGGRVKT), Arg281, Tyr292, Arg302, and Asn351 each bind a 1,2-diacyl-sn-glycero-3-phospho-(1D-myo-inositol-3,4,5-trisphosphate). The tract at residues 388–396 (RKKKVSSTK) is C-terminal autoinhibitory region.

In terms of assembly, interacts with TRIM23 and CYTIP. Interacts (via coiled-coil domain) with FRMD4A (via coiled-coil domain). Interacts with FRMD4B. Found in a complex with PARD3, CYTH1 and FRMD4A. Interacts (via N-terminal domain) with INAVA (via N-terminal domain). Ubiquitinated by SCF(FBXW11) E3 ubiquitin-protein ligase complex. Ubiquitination induces proteasomal degradation. In terms of tissue distribution, expressed in colon and small intestine (at protein level).

Its subcellular location is the cell membrane. The protein localises to the cytoplasm. The protein resides in the cytosol. It localises to the cell junction. It is found in the tight junction. Its subcellular location is the adherens junction. In terms of biological role, promotes guanine-nucleotide exchange on ARF1, ARF5 and ARF6. Promotes the activation of ARF factors through replacement of GDP with GTP. Plays an important role in membrane trafficking, during junctional remodeling and epithelial polarization, through regulation of ARF6 activity. This is Cytohesin-1 (Cyth1) from Mus musculus (Mouse).